The primary structure comprises 190 residues: Potassium-transporting ATPase KdpC subunit (190 aa).

A helical transmembrane segment spans residues Thr-10–Gly-30.

It belongs to the KdpC family. In terms of assembly, the system is composed of three essential subunits: KdpA, KdpB and KdpC.

It localises to the cell inner membrane. Its function is as follows. Part of the high-affinity ATP-driven potassium transport (or Kdp) system, which catalyzes the hydrolysis of ATP coupled with the electrogenic transport of potassium into the cytoplasm. This subunit acts as a catalytic chaperone that increases the ATP-binding affinity of the ATP-hydrolyzing subunit KdpB by the formation of a transient KdpB/KdpC/ATP ternary complex. This Shigella dysenteriae serotype 1 (strain Sd197) protein is Potassium-transporting ATPase KdpC subunit.